Here is a 168-residue protein sequence, read N- to C-terminus: DNA-binding protein inhibitor ID-1 (168 aa).

In terms of domain architecture, bHLH spans leucine 46–leucine 98. The interval glutamine 53–serine 106 is interaction with IFI204. The Nuclear export signal motif lies at valine 91–serine 104.

In terms of assembly, heterodimer with other HLH proteins. Interacts with CLOCK and BMAL1. Interacts with COPS5, IFI204, GATA4 and NKX2-5. In terms of processing, polyubiquitinated; which is favored by Ifi204 and leads to proteasomal degradation.

It localises to the cytoplasm. The protein resides in the nucleus. Transcriptional regulator (lacking a basic DNA binding domain) which negatively regulates the basic helix-loop-helix (bHLH) transcription factors by forming heterodimers and inhibiting their DNA binding and transcriptional activity. Implicated in regulating a variety of cellular processes, including cellular growth, senescence, differentiation, apoptosis, angiogenesis, and neoplastic transformation. Inhibits skeletal muscle and cardiac myocyte differentiation. Regulates the circadian clock by repressing the transcriptional activator activity of the CLOCK-BMAL1 heterodimer. The protein is DNA-binding protein inhibitor ID-1 (Id1) of Mus musculus (Mouse).